A 350-amino-acid chain; its full sequence is Glycerol-1-phosphate dehydrogenase [NAD(P)+] (350 aa).

NAD(+) is bound by residues 97–101 (GSKID) and 119–122 (TTPS). Aspartate 124 contributes to the substrate binding site. Serine 128 is an NAD(+) binding site. Residue aspartate 171 participates in substrate binding. Zn(2+) is bound by residues aspartate 171 and histidine 251. A substrate-binding site is contributed by histidine 255. Zn(2+) is bound at residue histidine 267.

The protein belongs to the glycerol-1-phosphate dehydrogenase family. Zn(2+) is required as a cofactor.

Its subcellular location is the cytoplasm. The enzyme catalyses sn-glycerol 1-phosphate + NAD(+) = dihydroxyacetone phosphate + NADH + H(+). The catalysed reaction is sn-glycerol 1-phosphate + NADP(+) = dihydroxyacetone phosphate + NADPH + H(+). The protein operates within membrane lipid metabolism; glycerophospholipid metabolism. Its function is as follows. Catalyzes the NAD(P)H-dependent reduction of dihydroxyacetonephosphate (DHAP or glycerone phosphate) to glycerol 1-phosphate (G1P). The G1P thus generated is used as the glycerophosphate backbone of phospholipids in the cellular membranes of Archaea. The protein is Glycerol-1-phosphate dehydrogenase [NAD(P)+] of Picrophilus torridus (strain ATCC 700027 / DSM 9790 / JCM 10055 / NBRC 100828 / KAW 2/3).